Here is a 120-residue protein sequence, read N- to C-terminus: Large ribosomal subunit protein uL22 (120 aa).

Belongs to the universal ribosomal protein uL22 family. In terms of assembly, part of the 50S ribosomal subunit.

This protein binds specifically to 23S rRNA; its binding is stimulated by other ribosomal proteins, e.g. L4, L17, and L20. It is important during the early stages of 50S assembly. It makes multiple contacts with different domains of the 23S rRNA in the assembled 50S subunit and ribosome. Its function is as follows. The globular domain of the protein is located near the polypeptide exit tunnel on the outside of the subunit, while an extended beta-hairpin is found that lines the wall of the exit tunnel in the center of the 70S ribosome. The polypeptide is Large ribosomal subunit protein uL22 (Corynebacterium efficiens (strain DSM 44549 / YS-314 / AJ 12310 / JCM 11189 / NBRC 100395)).